The chain runs to 405 residues: Arginine biosynthesis bifunctional protein ArgJ (405 aa).

Substrate is bound by residues Thr-152, Lys-178, Thr-189, Glu-276, Asn-400, and Ser-405. The Nucleophile role is filled by Thr-189.

The protein belongs to the ArgJ family. Heterotetramer of two alpha and two beta chains.

It localises to the cytoplasm. The enzyme catalyses N(2)-acetyl-L-ornithine + L-glutamate = N-acetyl-L-glutamate + L-ornithine. It carries out the reaction L-glutamate + acetyl-CoA = N-acetyl-L-glutamate + CoA + H(+). It participates in amino-acid biosynthesis; L-arginine biosynthesis; L-ornithine and N-acetyl-L-glutamate from L-glutamate and N(2)-acetyl-L-ornithine (cyclic): step 1/1. Its pathway is amino-acid biosynthesis; L-arginine biosynthesis; N(2)-acetyl-L-ornithine from L-glutamate: step 1/4. Its function is as follows. Catalyzes two activities which are involved in the cyclic version of arginine biosynthesis: the synthesis of N-acetylglutamate from glutamate and acetyl-CoA as the acetyl donor, and of ornithine by transacetylation between N(2)-acetylornithine and glutamate. This is Arginine biosynthesis bifunctional protein ArgJ from Chromobacterium violaceum (strain ATCC 12472 / DSM 30191 / JCM 1249 / CCUG 213 / NBRC 12614 / NCIMB 9131 / NCTC 9757 / MK).